The chain runs to 321 residues: Agamous-like MADS-box protein AGL80 (321 aa).

An MADS-box domain is found at 1–61 (MTRKKVKLAY…DTNPEVWPSN (61 aa)). Residues 89-114 (FLKQRIAKATETLRRQRKDSRELEMT) adopt a coiled-coil conformation.

In terms of assembly, interacts with AGL61 and AGL62. Forms a heterodimer with AGL61. Interacts with MEE14/CBP1. In terms of tissue distribution, expressed in the central cell of the female gametophyte and in early endosperm. Also detected in ovaries, young siliques, roots, leaves, stems, young flowers and anthers.

Its subcellular location is the nucleus. In terms of biological role, probable transcription factor. Controls central cell differentiation during female gametophyte development. Required for the expression of DEMETER and DD46, but not for the expression of FIS2. Probable transcription factor that may function in the maintenance of the proper function of the central cell in pollen tube attraction. The chain is Agamous-like MADS-box protein AGL80 (AGL80) from Arabidopsis thaliana (Mouse-ear cress).